The following is a 255-amino-acid chain: Methylthioribulose-1-phosphate dehydratase (255 aa).

Residue cysteine 98 coordinates substrate. Zn(2+)-binding residues include histidine 116 and histidine 118. Residue glutamate 150 is the Proton donor/acceptor of the active site. Zn(2+) is bound at residue histidine 207.

Belongs to the aldolase class II family. MtnB subfamily. Zn(2+) serves as cofactor.

The protein resides in the cytoplasm. It carries out the reaction 5-(methylsulfanyl)-D-ribulose 1-phosphate = 5-methylsulfanyl-2,3-dioxopentyl phosphate + H2O. It functions in the pathway amino-acid biosynthesis; L-methionine biosynthesis via salvage pathway; L-methionine from S-methyl-5-thio-alpha-D-ribose 1-phosphate: step 2/6. Functionally, catalyzes the dehydration of methylthioribulose-1-phosphate (MTRu-1-P) into 2,3-diketo-5-methylthiopentyl-1-phosphate (DK-MTP-1-P). This Pyricularia oryzae (strain 70-15 / ATCC MYA-4617 / FGSC 8958) (Rice blast fungus) protein is Methylthioribulose-1-phosphate dehydratase.